Consider the following 191-residue polypeptide: Holliday junction branch migration complex subunit RuvA (191 aa).

The tract at residues 1-64 (MIRGVRGTLV…EDELALYGFA (64 aa)) is domain I. The interval 65-136 (TEAELELFLS…ELRGRLPALT (72 aa)) is domain II. Residues 136–139 (TEVQ) form a flexible linker region. Residues 140–191 (AGEPIDQELVAALQALGYTAQEARQAATHPEVRRAPSLEERIVAALRQLAPP) are domain III.

It belongs to the RuvA family. As to quaternary structure, homotetramer. Forms an RuvA(8)-RuvB(12)-Holliday junction (HJ) complex. HJ DNA is sandwiched between 2 RuvA tetramers; dsDNA enters through RuvA and exits via RuvB. An RuvB hexamer assembles on each DNA strand where it exits the tetramer. Each RuvB hexamer is contacted by two RuvA subunits (via domain III) on 2 adjacent RuvB subunits; this complex drives branch migration. In the full resolvosome a probable DNA-RuvA(4)-RuvB(12)-RuvC(2) complex forms which resolves the HJ.

The protein localises to the cytoplasm. In terms of biological role, the RuvA-RuvB-RuvC complex processes Holliday junction (HJ) DNA during genetic recombination and DNA repair, while the RuvA-RuvB complex plays an important role in the rescue of blocked DNA replication forks via replication fork reversal (RFR). RuvA specifically binds to HJ cruciform DNA, conferring on it an open structure. The RuvB hexamer acts as an ATP-dependent pump, pulling dsDNA into and through the RuvAB complex. HJ branch migration allows RuvC to scan DNA until it finds its consensus sequence, where it cleaves and resolves the cruciform DNA. The polypeptide is Holliday junction branch migration complex subunit RuvA (Thermomicrobium roseum (strain ATCC 27502 / DSM 5159 / P-2)).